Reading from the N-terminus, the 218-residue chain is MKLGILGGTFNPIHSAHLRIAEEVRERCRLDRILFIPAATPPHKELAGEIPFADRHAMVAAAIADNPDFAVTDLENRRAGKSYSVHTLELLRQEYPRDEFYFIIGMDSYRSLGIWKDFPRLFELTNLVVAARPGSPCDDPLRLLPVVIQEQFCYDENAHMLRHQSGHVVIFLEETFLDISSTHIRQLVAAGRSIRYLLPSGVEHYIYRHGLYRSQERS.

The protein belongs to the NadD family.

It catalyses the reaction nicotinate beta-D-ribonucleotide + ATP + H(+) = deamido-NAD(+) + diphosphate. Its pathway is cofactor biosynthesis; NAD(+) biosynthesis; deamido-NAD(+) from nicotinate D-ribonucleotide: step 1/1. In terms of biological role, catalyzes the reversible adenylation of nicotinate mononucleotide (NaMN) to nicotinic acid adenine dinucleotide (NaAD). This is Probable nicotinate-nucleotide adenylyltransferase from Syntrophotalea carbinolica (strain DSM 2380 / NBRC 103641 / GraBd1) (Pelobacter carbinolicus).